A 554-amino-acid chain; its full sequence is Probable pectinesterase/pectinesterase inhibitor 6 (554 aa).

A signal peptide spans 1–32; that stretch reads MDHKILLTPPKSLYTKCIITIIYVVSISHLNA. The interval 29–183 is pectinesterase inhibitor 6; sequence HLNAHFITSC…TKSISNSLAV (155 aa). Residues Asn119 and Asn172 are each glycosylated (N-linked (GlcNAc...) asparagine). The interval 250–540 is pectinesterase 6; that stretch reads DLVVAKDGSG…FTVENFLDGN (291 aa). Substrate-binding residues include Thr327 and Gln357. Asp380 functions as the Proton donor; for pectinesterase activity in the catalytic mechanism. Residues Cys394 and Cys414 are joined by a disulfide bond. Asp401 (nucleophile; for pectinesterase activity) is an active-site residue. Substrate is bound by residues Arg460 and Trp462.

In the N-terminal section; belongs to the PMEI family. This sequence in the C-terminal section; belongs to the pectinesterase family. Expressed in rosette leaves, flower and siliques.

The protein localises to the secreted. It localises to the cell wall. The enzyme catalyses [(1-&gt;4)-alpha-D-galacturonosyl methyl ester](n) + n H2O = [(1-&gt;4)-alpha-D-galacturonosyl](n) + n methanol + n H(+). It participates in glycan metabolism; pectin degradation; 2-dehydro-3-deoxy-D-gluconate from pectin: step 1/5. Its function is as follows. Acts in the modification of cell walls via demethylesterification of cell wall pectin. The chain is Probable pectinesterase/pectinesterase inhibitor 6 (PME6) from Arabidopsis thaliana (Mouse-ear cress).